Here is a 740-residue protein sequence, read N- to C-terminus: Ion-translocating oxidoreductase complex subunit C (740 aa).

4Fe-4S ferredoxin-type domains are found at residues 369–397 (GEPQEEQSCIRCSACADACPADLLPQQLY) and 407–436 (KATTHNIADCIECGACAWVCPSNIPLVQYF). [4Fe-4S] cluster contacts are provided by cysteine 377, cysteine 380, cysteine 383, cysteine 387, cysteine 416, cysteine 419, cysteine 422, and cysteine 426. 2 disordered regions span residues 571–590 (LEQQQANAEPEQQVDPRKAA) and 602–716 (KLEQ…DPRK). Low complexity-rich tracts occupy residues 573–583 (QQQANAEPEQQ) and 637–647 (QQQANAEPEQQ).

Belongs to the 4Fe4S bacterial-type ferredoxin family. RnfC subfamily. As to quaternary structure, the complex is composed of six subunits: RsxA, RsxB, RsxC, RsxD, RsxE and RsxG. The cofactor is [4Fe-4S] cluster.

The protein localises to the cell inner membrane. Functionally, part of a membrane-bound complex that couples electron transfer with translocation of ions across the membrane. Required to maintain the reduced state of SoxR. Probably transfers electron from NAD(P)H to SoxR. The sequence is that of Ion-translocating oxidoreductase complex subunit C from Escherichia coli (strain K12).